The primary structure comprises 53 residues: MFRWGIIFLVIALIAAALGFGGLAGTAAGAAKIVFVVGIVLFLVSLFMGRKRP.

The next 2 helical transmembrane spans lie at 4–24 and 30–48; these read WGII…GGLA and AAKI…SLFM.

Belongs to the UPF0391 family.

The protein localises to the cell membrane. In Salmonella agona (strain SL483), this protein is UPF0391 membrane protein YtjA.